We begin with the raw amino-acid sequence, 790 residues long: E3 ubiquitin-protein ligase Jade-2 (790 aa).

Disordered regions lie at residues 1 to 52 (MEEK…PSEV) and 111 to 130 (GPPA…SQPD). Residues S9 and S15 each carry the phosphoserine modification. Over residues 9–28 (SISSDNSDTTDSHATSTSAS) the composition is skewed to low complexity. 2 positions are modified to N6-acetyllysine: K32 and K38. S117 bears the Phosphoserine mark. Residues 199–249 (DVVCDVCRSPEGEDGNEMVFCDKCNVCVHQACYGILKVPTGSWLCRTCALG) form a PHD-type 1 zinc finger. Residues 251-285 (QPKCLLCPKRGGALKPTRSGTKWVHVSCALWIPEV) form a C2HC pre-PHD-type zinc finger. Residue K298 is modified to N6-acetyllysine. The segment at 309–365 (LSCSLCKECTGTCIQCSMPSCVTAFHVTCAFDHGLEMRTILADNDEVKFKSFCQEHS) adopts a PHD-type 2 zinc-finger fold. Disordered regions lie at residues 361–386 (CQEH…AGED) and 578–777 (SFMR…PREA). Polar residues predominate over residues 372–381 (EPTSEPTEPS). A compositionally biased stretch (basic residues) spans 593-606 (KARGRTRLPAKKKP). The segment covering 684-693 (AASVAADSDV) has biased composition (low complexity). Basic and acidic residues predominate over residues 737 to 747 (ERPKVSLHFDT). Over residues 757–767 (EMSDSDVEAED) the composition is skewed to acidic residues.

Belongs to the JADE family. Component of the HBO1 complex composed at least of ING4 or ING5, MYST2/HBO1, MEAF6, and one of JADE1, JADE2 and JADE3. Interacts (via C-terminus) with KDM1A (via AOD/Tower domain).

The catalysed reaction is S-ubiquitinyl-[E2 ubiquitin-conjugating enzyme]-L-cysteine + [acceptor protein]-L-lysine = [E2 ubiquitin-conjugating enzyme]-L-cysteine + N(6)-ubiquitinyl-[acceptor protein]-L-lysine.. The protein operates within protein modification; protein ubiquitination. Its function is as follows. Scaffold subunit of some HBO1 complexes, which have a histone H4 acetyltransferase activity. Acts as an E3 ubiquitin-protein ligase mediating the ubiquitination and subsequent proteasomal degradation of target protein histone demethylase KDM1A. Also acts as a ubiquitin ligase E3 toward itself. Positive regulator of neurogenesis. The chain is E3 ubiquitin-protein ligase Jade-2 (JADE2) from Homo sapiens (Human).